Reading from the N-terminus, the 69-residue chain is Mu-conotoxin-like Am3.1 (69 aa).

The first 20 residues, Met1 to Ala20, serve as a signal peptide directing secretion. Residues Val21–Arg52 constitute a propeptide that is removed on maturation. Residues Pro22–Glu43 are disordered. The span at Pro28–Glu43 shows a compositional bias: basic and acidic residues. Position 66 is a 4-hydroxyproline; partial; in minor form (Pro66). Cys68 carries the cysteine amide modification.

Belongs to the conotoxin M family. Post-translationally, mostly non-hydroxylated. In terms of processing, contains 3 disulfide bonds. In terms of tissue distribution, expressed by the venom duct.

The protein resides in the secreted. Functionally, mu-conotoxins block voltage-gated sodium channels (Nav). The polypeptide is Mu-conotoxin-like Am3.1 (Conus amadis (Amadis cone)).